We begin with the raw amino-acid sequence, 510 residues long: Bifunctional pantoate ligase/cytidylate kinase (510 aa).

Residues methionine 1–valine 276 are pantoate--beta-alanine ligase. An ATP-binding site is contributed by methionine 29 to histidine 36. Histidine 36 (proton donor) is an active-site residue. Glutamine 61 serves as a coordination point for (R)-pantoate. Residue glutamine 61 coordinates beta-alanine. Glycine 150–aspartate 153 lines the ATP pocket. Glutamine 156 contributes to the (R)-pantoate binding site. Leucine 187–arginine 190 is an ATP binding site. The interval phenylalanine 277–lysine 510 is cytidylate kinase.

It in the N-terminal section; belongs to the pantothenate synthetase family. The protein in the C-terminal section; belongs to the cytidylate kinase family. Type 1 subfamily.

It localises to the cytoplasm. It catalyses the reaction (R)-pantoate + beta-alanine + ATP = (R)-pantothenate + AMP + diphosphate + H(+). The catalysed reaction is CMP + ATP = CDP + ADP. It carries out the reaction dCMP + ATP = dCDP + ADP. It participates in cofactor biosynthesis; (R)-pantothenate biosynthesis; (R)-pantothenate from (R)-pantoate and beta-alanine: step 1/1. Functionally, catalyzes the condensation of pantoate with beta-alanine in an ATP-dependent reaction via a pantoyl-adenylate intermediate. In terms of biological role, catalyzes the transfer of a phosphate group from ATP to either CMP or dCMP to form CDP or dCDP and ADP, respectively. This Prochlorococcus marinus (strain MIT 9301) protein is Bifunctional pantoate ligase/cytidylate kinase.